A 768-amino-acid chain; its full sequence is Tripartite motif-containing protein 67 (768 aa).

The RING-type; degenerate zinc finger occupies 7–42 (CPVCGSLFREPIILPCSHNVCLPCARTIAVQTPDGE). The span at 55-70 (AAAAATPPDQDAAAGA) shows a compositional bias: low complexity. Disordered regions lie at residues 55-74 (AAAA…TSGG) and 247-284 (QPPP…ASAP). Residues 201–248 (AICQLCDRTPPEPAATLCEQCDVLYCATCQLKCHPSRGPFAKHRLVQP) form a B box-type 1; degenerate zinc finger. A compositionally biased stretch (pro residues) spans 247–257 (QPPPPPTPPEA). The segment at 285–327 (RKFPTCPEHEMENYSMYCVSCRSPVCYMCLEEGRHSKHEVKPL) adopts a B box-type 2 zinc-finger fold. Zn(2+)-binding residues include C290, H293, C313, and H319. Residues 332-369 (KQHKAQLSQALNGVSDKAKEAKEFLVQLKNILQQIQEN) adopt a coiled-coil conformation. The COS domain maps to 435 to 493 (IKEDDPSGFLQISDALIKRVQTSQEQWVKGALEPKVSAEFDLTLDSEPLLQAIHQLDFV). The Fibronectin type-III domain maps to 498–592 (PPVPLLQLEK…KTVVLQTSDV (95 aa)). Positions 574-765 (NSSGVGPYSK…VPTNLGRPKL (192 aa)) constitute a B30.2/SPRY domain.

The protein localises to the cytoplasm. It is found in the cytoskeleton. This is Tripartite motif-containing protein 67 (Trim67) from Mus musculus (Mouse).